The following is an 864-amino-acid chain: Leucine--tRNA ligase (864 aa).

The 'HIGH' region motif lies at Pro-42–His-52. The 'KMSKS' region signature appears at Lys-624–Ser-628. Lys-627 is an ATP binding site.

Belongs to the class-I aminoacyl-tRNA synthetase family.

It is found in the cytoplasm. It carries out the reaction tRNA(Leu) + L-leucine + ATP = L-leucyl-tRNA(Leu) + AMP + diphosphate. This is Leucine--tRNA ligase from Burkholderia cenocepacia (strain ATCC BAA-245 / DSM 16553 / LMG 16656 / NCTC 13227 / J2315 / CF5610) (Burkholderia cepacia (strain J2315)).